A 138-amino-acid chain; its full sequence is Large ribosomal subunit protein uL16 (138 aa).

The segment covering Met1–Gln17 has biased composition (basic residues). Residues Met1 to Gly23 are disordered.

It belongs to the universal ribosomal protein uL16 family. As to quaternary structure, part of the 50S ribosomal subunit.

In terms of biological role, binds 23S rRNA and is also seen to make contacts with the A and possibly P site tRNAs. The sequence is that of Large ribosomal subunit protein uL16 from Mycobacterium sp. (strain JLS).